A 220-amino-acid polypeptide reads, in one-letter code: Cytidylate kinase (220 aa).

Residue 10-18 (GPASSGKST) coordinates ATP.

It belongs to the cytidylate kinase family. Type 1 subfamily.

The protein resides in the cytoplasm. It catalyses the reaction CMP + ATP = CDP + ADP. The catalysed reaction is dCMP + ATP = dCDP + ADP. This chain is Cytidylate kinase, found in Lactococcus lactis subsp. cremoris (strain MG1363).